The sequence spans 184 residues: Casparian strip membrane protein 1 (184 aa).

Topologically, residues Met1–Ser24 are cytoplasmic. A helical membrane pass occupies residues Val25–Met45. Residues Gly46–Thr72 lie on the Extracellular side of the membrane. N-linked (GlcNAc...) asparagine glycosylation is present at Asn49. The chain crosses the membrane as a helical span at residues Phe73–Ile93. At Val94–Arg105 the chain is on the cytoplasmic side. The chain crosses the membrane as a helical span at residues Leu106–Ala126. Residues Ala127 to Ser159 lie on the Extracellular side of the membrane. A helical membrane pass occupies residues Leu160–Ala180. Residues Leu181–Arg184 are Cytoplasmic-facing.

Belongs to the Casparian strip membrane proteins (CASP) family. In terms of assembly, homodimer and heterodimers.

It is found in the cell membrane. Its function is as follows. Regulates membrane-cell wall junctions and localized cell wall deposition. Required for establishment of the Casparian strip membrane domain (CSD) and the subsequent formation of Casparian strips, a cell wall modification of the root endodermis that determines an apoplastic barrier between the intraorganismal apoplasm and the extraorganismal apoplasm and prevents lateral diffusion. The polypeptide is Casparian strip membrane protein 1 (Panicum virgatum (Blackwell switchgrass)).